We begin with the raw amino-acid sequence, 35 residues long: Dermonecrotic toxin LdSicTox-alpha-1 (35 aa).

Histidine 11 is an active-site residue. Residues glutamate 31 and aspartate 33 each contribute to the Mg(2+) site.

The protein belongs to the arthropod phospholipase D family. Class I subfamily. It depends on Mg(2+) as a cofactor. In terms of processing, contains 1 disulfide bond. Expressed by the venom gland.

Its subcellular location is the secreted. The enzyme catalyses an N-(acyl)-sphingosylphosphocholine = an N-(acyl)-sphingosyl-1,3-cyclic phosphate + choline. It catalyses the reaction an N-(acyl)-sphingosylphosphoethanolamine = an N-(acyl)-sphingosyl-1,3-cyclic phosphate + ethanolamine. It carries out the reaction a 1-acyl-sn-glycero-3-phosphocholine = a 1-acyl-sn-glycero-2,3-cyclic phosphate + choline. The catalysed reaction is a 1-acyl-sn-glycero-3-phosphoethanolamine = a 1-acyl-sn-glycero-2,3-cyclic phosphate + ethanolamine. In terms of biological role, dermonecrotic toxins cleave the phosphodiester linkage between the phosphate and headgroup of certain phospholipids (sphingolipid and lysolipid substrates), forming an alcohol (often choline) and a cyclic phosphate. This toxin acts on sphingomyelin (SM). It may also act on ceramide phosphoethanolamine (CPE), lysophosphatidylcholine (LPC) and lysophosphatidylethanolamine (LPE), but not on lysophosphatidylserine (LPS), and lysophosphatidylglycerol (LPG). It acts by transphosphatidylation, releasing exclusively cyclic phosphate products as second products. Induces dermonecrosis, hemolysis, increased vascular permeability, edema, inflammatory response, and platelet aggregation. The chain is Dermonecrotic toxin LdSicTox-alpha-1 from Loxosceles deserta (Desert recluse spider).